A 405-amino-acid chain; its full sequence is tRNA N6-adenosine threonylcarbamoyltransferase, mitochondrial (405 aa).

The transit peptide at 1-19 (MAKYISNLSRIAVVRGRVS) directs the protein to the mitochondrion. 2 residues coordinate a divalent metal cation: His-138 and His-142. Substrate is bound by residues 160 to 164 (LISGG), Asp-193, Gly-213, Glu-217, 320 to 321 (SN), and Thr-348. Position 349 (Asp-349) interacts with a divalent metal cation.

This sequence belongs to the KAE1 / TsaD family. In terms of assembly, monomer. It depends on a divalent metal cation as a cofactor.

It localises to the mitochondrion. The catalysed reaction is L-threonylcarbamoyladenylate + adenosine(37) in tRNA = N(6)-L-threonylcarbamoyladenosine(37) in tRNA + AMP + H(+). In terms of biological role, required for the formation of a threonylcarbamoyl group on adenosine at position 37 (t(6)A37) in mitochondrial tRNAs that read codons beginning with adenine. Probably involved in the transfer of the threonylcarbamoyl moiety of threonylcarbamoyl-AMP (TC-AMP) to the N6 group of A37. Involved in mitochondrial genome maintenance. In Xenopus tropicalis (Western clawed frog), this protein is tRNA N6-adenosine threonylcarbamoyltransferase, mitochondrial.